A 577-amino-acid chain; its full sequence is Arginine--tRNA ligase (577 aa).

Positions 122–132 match the 'HIGH' region motif; it reads PNVAKEMHVGH.

Belongs to the class-I aminoacyl-tRNA synthetase family. In terms of assembly, monomer.

It is found in the cytoplasm. The enzyme catalyses tRNA(Arg) + L-arginine + ATP = L-arginyl-tRNA(Arg) + AMP + diphosphate. The protein is Arginine--tRNA ligase of Salmonella schwarzengrund (strain CVM19633).